Here is a 105-residue protein sequence, read N- to C-terminus: Serine protease inhibitor Kazal-type 8 (105 aa).

The N-terminal stretch at 1 to 21 (MKVIFSVAVLVLASSVWTSLA) is a signal peptide. 3 disulfide bridges follow: cysteine 44-cysteine 78, cysteine 51-cysteine 75, and cysteine 64-cysteine 96. The Kazal-like domain occupies 44–98 (CIKNIQLCWILSYFKVSEPICGSNQVTYEGECHLCSGILYEDRTVIKVHDGPCEH).

Expressed in epydiymis, in the cauda, corpus and caput.

Its subcellular location is the secreted. Its function is as follows. Probable serine protease inhibitor. In Mus musculus (Mouse), this protein is Serine protease inhibitor Kazal-type 8 (Spink8).